The primary structure comprises 181 residues: Protein Syd (181 aa).

Belongs to the Syd family.

Its subcellular location is the cell inner membrane. Functionally, interacts with the SecY protein in vivo. May bind preferentially to an uncomplexed state of SecY, thus functioning either as a chelating agent for excess SecY in the cell or as a regulatory factor that negatively controls the translocase function. The protein is Protein Syd of Salmonella agona (strain SL483).